A 441-amino-acid chain; its full sequence is MTRVIHTGDTHLGYQQYHSPERRQDFLDAFERVVADALDGDVDAVVHAGDLYHDRRPELPDLLGTLAALRRLDDAGIPFLAIVGNHESTRGGQWLDLFERLGLATRLGRDPHVVGGVAFYGLDHVPRSRRDELDYQFDPVDADRAVLVAHGLFTPFAHADWETETVLAESNVDFDAVLLGDNHVPDTAELDGTWVTYCGSTERASASERDPRGYNLVEFTPDAVDIRRRTLETRPFAFVEVDLAGDEGIERVRQRVREFDLEDAVVIVELRGEGETVTPAAVESFAVEEGALVARVNDKRDIDDDGDLATDVTFADPDDAVRERVREMGLSSAALDVDETVRASKVADSNVRDEVRERVESLLSDDPDAFVAAERESDAEAEESESVEDAADGEDAAAVEDTAETAAEAATDTDTETTADTDSETAADPAASRDSSLGDFA.

Residues Asp-9, His-11, Asp-50, and Asn-85 each coordinate Mn(2+). The Proton donor role is filled by His-86. His-150, Asp-181, and His-183 together coordinate Mn(2+). The interval 360 to 441 is disordered; the sequence is ESLLSDDPDA…SRDSSLGDFA (82 aa). Acidic residues-rich tracts occupy residues 379-403 and 411-425; these read AEAEESESVEDAADGEDAAAVEDTA and TDTDTETTADTDSET.

This sequence belongs to the MRE11/RAD32 family. As to quaternary structure, homodimer. Forms a heterotetramer composed of two Mre11 subunits and two Rad50 subunits. Mn(2+) serves as cofactor.

Its activity is regulated as follows. Nuclease activity is regulated by Rad50. Part of the Rad50/Mre11 complex, which is involved in the early steps of DNA double-strand break (DSB) repair. Mre11 binds to DSB ends and has both double-stranded 3'-5' exonuclease activity and single-stranded endonuclease activity. In polyploid organisms, the Rad50/Mre11 complex appears to restrain the repair of double-strand breaks by homologous recombination, allowing another pathway to act as the primary mode of repair. The chain is DNA double-strand break repair protein Mre11 from Haloferax volcanii (strain ATCC 29605 / DSM 3757 / JCM 8879 / NBRC 14742 / NCIMB 2012 / VKM B-1768 / DS2) (Halobacterium volcanii).